A 2997-amino-acid chain; its full sequence is MADPGMMSLFGEDGNIFSEGLEGLGECGYPENPVNPMGQQMPIDQGFASLQPSLHHPSTNQNQTKLTHFDHYNQYEQQKMHLMDQPNRMMSNTPGNGLASPHSQYHTPPVPQVPHGGSGGGQMGVYPGMQNERHGQSFVDSSSMWGPRAVQVPDQIRAPYQQQQPQPQPPQPAPSGPPAQGHPQHMQQMGSYMARGDFSMQQHGQPQQRMSQFSQGQEGLNQGNPFIATSGPGHLSHVPQQSPSMAPSLRHSVQQFHHHPSTALHGESVAHSPRFSPNPPQQGAVRPQTLNFSSRSQTVPSPTINNSGQYSRYPYSNLNQGLVNNTGMNQNLGLTNNTPMNQSVPRYPNAVGFPSNSGQGLMHQQPIHPSGSLNQMNTQTMHPSQPQGTYASPPPMSPMKAMSNPAGTPPPQVRPGSAGIPMEVGSYPNMPHPQPSHQPPGAMGIGQRNMGPRNMQQSRPFIGMSSAPRELTGHMRPNGCPGVGLGDPQAIQERLIPGQQHPGQQPSFQQLPTCPPLQPHPGLHHQSSPPHPHHQPWAQLHPSPQNTPQKVPVHQHSPSEPFLEKPVPDMTQVSGPNAQLVKSDDYLPSIEQQPQQKKKKKKNNHIVAEDPSKGFGKDDFPGGVDNQELNRNSLDGSQEEKKKKKRSKAKKDPKEPKEPKEKKEPKEPKTPKAPKIPKEPKEKKAKTATPKPKSSKKSSNKKPDSEASALKKKVNKGKTEGSENSDLDKTPPPSPPPEEDEDPGVQKRRSSRQVKRKRYTEDLEFKISDEEADDADAAGRDSPSNTSQSEQQESVDAEGPVVEKIMSSRSVKKQKESGEEVEIEEFYVKYKNFSYLHCQWASIEDLEKDKRIQQKIKRFKAKQGQNKFLSEIEDELFNPDYVEVDRIMDFARSTDDRGEPVTHYLVKWCSLPYEDSTWERRQDIDQAKIEEFEKLMSREPETERVERPPADDWKKSESSREYKNNNKLREYQLEGVNWLLFNWYNMRNCILADEMGLGKTIQSITFLYEIYLKGIHGPFLVIAPLSTIPNWEREFRTWTELNVVVYHGSQASRRTIQLYEMYFKDPQGRVIKGSYKFHAIITTFEMILTDCPELRNIPWRCVVIDEAHRLKNRNCKLLEGLKMMDLEHKVLLTGTPLQNTVEELFSLLHFLEPSRFPSETTFMQEFGDLKTEEQVQKLQAILKPMMLRRLKEDVEKNLAPKEETIIEVELTNIQKKYYRAILEKNFTFLSKGGGQANVPNLLNTMMELRKCCNHPYLINGAEEKILEEFKETHNAESPDFQLQAMIQAAGKLVLIDKLLPKLKAGGHRVLIFSQMVRCLDILEDYLIQRRYPYERIDGRVRGNLRQAAIDRFSKPDSDRFVFLLCTRAGGLGINLTAADTCIIFDSDWNPQNDLQAQARCHRIGQSKSVKIYRLITRNSYEREMFDKASLKLGLDKAVLQSMSGRENATNGVQQLSKKEIEDLLRKGAYGALMDEEDEGSKFCEEDIDQILLRRTHTITIESEGKGSTFAKASFVASGNRTDISLDDPNFWQKWAKKAELDIDALNGRNNLVIDTPRVRKQTRLYSAVKEDELMEFSDLESDSEEKPCAKPRRPQDKSQGYARSECFRVEKNLLVYGWGRWTDILSHGRYKRQLTEQDVETICRTILVYCLNHYKGDENIKSFIWDLITPTADGQTRALVNHSGLSAPVPRGRKGKKVKAQSTQPVVQDADWLASCNPDALFQEDSYKKHLKHHCNKVLLRVRMLYYLRQEVIGDQADKILEGADSSEADVWIPEPFHAEVPADWWDKEADKSLLIGVFKHGYEKYNSMRADPALCFLERVGMPDAKAIAAEQRGTDMLADGGDGGEFDREDEDPEYKPTRTPFKDEIDEFANSPSEDKEESMEIHATGKHSESNAELGQLYWPNTSTLTTRLRRLITAYQRSYKRQQMRQEALMKTDRRRRRPREEVRALEAEREAIISEKRQKWTRREEADFYRVVSTFGVIFDPVKQQFDWNQFRAFARLDKKSDESLEKYFSCFVAMCRRVCRMPVKPDDEPPDLSSIIEPITEERASRTLYRIELLRKIREQVLHHPQLGERLKLCQPSLDLPEWWECGRHDRDLLVGAAKHGVSRTDYHILNDPELSFLDAHKNFAQNRGAGNTSSLNPLAVGFVQTPPVISSAHIQDERVLEQAEGKVEEPENPAAKEKCEGKEEEEETDGSGKESKQECEAEASSVKNELKGVEVGADTGSKSISEKGSEEDEEEKLEDDDKSEESSQPEAGAVSRGKNFDEESNASMSTARDETRDGFYMEDGDPSVAQLLHERTFAFSFWPKDRVMINRLDNICEAVLKGKWPVNRRQMFDFQGLIPGYTPTTVDSPLQKRSFAELSMVGQASISGSEDITTSPQLSKEDALNLSVPRQRRRRRRKIEIEAERAAKRRNLMEMVAQLRESQVVSENGQEKVVDLSKASREATSSTSNFSSLSSKFILPNVSTPVSDAFKTQMELLQAGLSRTPTRHLLNGSLVDGEPPMKRRRGRRKNVEGLDLLFMSHKRTSLSAEDAEVTKAFEEDIETPPTRNIPSPGQLDPDTRIPVINLEDGTRLVGEDAPKNKDLVEWLKLHPTYTVDMPSYVPKNADVLFSSFQKPKQKRHRCRNPNKLDINTLTGEERVPVVNKRNGKKMGGAMAPPMKDLPRWLEENPEFAVAPDWTDIVKQSGFVPESMFDRLLTGPVVRGEGASRRGRRPKSEIARAAAAAAAVASTSGINPLLVNSLFAGMDLTSLQNLQNLQSLQLAGLMGFPPGLATAATAGGDAKNPAAVLPLMLPGMAGLPNVFGLGGLLNNPLSAATGNTTTASSQGEPEDSTSKGEEKGNENEDENKDSEKSTDAVSAADSANGSVGAATAPAGLPSNPLAFNPFLLSTMAPGLFYPSMFLPPGLGGLTLPGFPALAGLQNAVGSSEEKAADKAEGGPFKDGETLEGSDAEESLDKTAESSLLEDEIAQGEELDSLDGGDEIENNENDE.

Residues P86–M144 form a disordered region. Over residues R88–H106 the composition is skewed to polar residues. Omega-N-methylarginine is present on R148. 5 disordered regions span residues Y160 to M186, S199 to P287, Q375 to G419, G498 to E816, and R938 to S959. Residues Q166–P177 show a composition bias toward pro residues. Composition is skewed to polar residues over residues S199–N224 and V238–Q255. The residue at position 286 (R286) is an Asymmetric dimethylarginine. Residues Q375–Y390 show a composition bias toward polar residues. The span at G498–Q510 shows a compositional bias: low complexity. Residues V607–F620 are compositionally biased toward basic and acidic residues. Residues Q627–G636 are compositionally biased toward polar residues. S637 is modified (phosphoserine). 2 stretches are compositionally biased toward basic and acidic residues: residues K650–E682 and G717–K729. At S725 the chain carries Phosphoserine. The segment covering Q746–R758 has biased composition (basic residues). Basic and acidic residues predominate over residues Y759–D769. The segment covering S782–S794 has biased composition (polar residues). Chromo domains follow at residues P800–K867 and V882–R947. The Helicase ATP-binding domain maps to L980–S1154. D993–T1000 is an ATP binding site. The short motif at D1105–H1108 is the DEAH box element. The 171-residue stretch at L1294–L1464 folds into the Helicase C-terminal domain. Disordered regions lie at residues F1576–G1600 and D1837–P1863. Residues S1577 and S1581 each carry the phosphoserine modification. Residues E1584 to D1596 are compositionally biased toward basic and acidic residues. The segment covering D1844–P1855 has biased composition (acidic residues). S1874 is modified (phosphoserine). Basic and acidic residues-rich tracts occupy residues Q2170–G2189 and G2198–C2207. The segment at Q2170 to E2290 is disordered. S2231, S2233, S2237, S2251, S2272, S2275, S2356, and S2395 each carry phosphoserine. Positions S2237 to S2251 are enriched in acidic residues. The stretch at R2401–Q2431 forms a coiled coil. T2472 carries the post-translational modification Phosphothreonine. Phosphoserine occurs at positions 2533 and 2535. T2551 is subject to Phosphothreonine. A phosphoserine mark is found at S2559 and S2619. Low complexity predominate over residues A2823–S2832. 2 disordered regions span residues A2823–G2872 and E2935–E2997. Composition is skewed to basic and acidic residues over residues S2839–E2849 and E2935–E2951. 2 positions are modified to phosphoserine: S2956 and S2961. Residues L2970 to E2997 show a composition bias toward acidic residues.

The protein belongs to the SNF2/RAD54 helicase family. As to quaternary structure, may interact with CTCF. Interacts with CHD8. Interacts with FAM124B. Found in a complex composed of AGO2, CHD7 and ARB2A. Interacts with TLK2. As to expression, widely expressed in fetal and adult tissues.

It is found in the nucleus. The protein resides in the nucleolus. It carries out the reaction ATP + H2O = ADP + phosphate + H(+). Functionally, ATP-dependent chromatin-remodeling factor, slides nucleosomes along DNA; nucleosome sliding requires ATP. Probable transcription regulator. May be involved in the in 45S precursor rRNA production. The polypeptide is Chromodomain-helicase-DNA-binding protein 7 (CHD7) (Homo sapiens (Human)).